Here is a 262-residue protein sequence, read N- to C-terminus: tRNA pseudouridine synthase A (262 aa).

Asp52 serves as the catalytic Nucleophile. Residue Tyr103 participates in substrate binding.

Belongs to the tRNA pseudouridine synthase TruA family.

The catalysed reaction is uridine(38/39/40) in tRNA = pseudouridine(38/39/40) in tRNA. Functionally, formation of pseudouridine at positions 38, 39 and 40 in the anticodon stem and loop of transfer RNAs. The protein is tRNA pseudouridine synthase A of Methanococcus maripaludis (strain DSM 14266 / JCM 13030 / NBRC 101832 / S2 / LL).